The chain runs to 355 residues: DNA polymerase IV (355 aa).

Positions 7-188 (IIHIDMDCFY…LPVRKLFGVG (182 aa)) constitute a UmuC domain. The Mg(2+) site is built by aspartate 11 and aspartate 106. Residue glutamate 107 is part of the active site.

Belongs to the DNA polymerase type-Y family. In terms of assembly, monomer. It depends on Mg(2+) as a cofactor.

It localises to the cytoplasm. The enzyme catalyses DNA(n) + a 2'-deoxyribonucleoside 5'-triphosphate = DNA(n+1) + diphosphate. Functionally, poorly processive, error-prone DNA polymerase involved in untargeted mutagenesis. Copies undamaged DNA at stalled replication forks, which arise in vivo from mismatched or misaligned primer ends. These misaligned primers can be extended by PolIV. Exhibits no 3'-5' exonuclease (proofreading) activity. May be involved in translesional synthesis, in conjunction with the beta clamp from PolIII. The sequence is that of DNA polymerase IV from Legionella pneumophila (strain Paris).